The following is a 425-amino-acid chain: Serine--tRNA ligase (425 aa).

Thr230 to Glu232 contributes to the L-serine binding site. Residue Arg261–Glu263 participates in ATP binding. Glu284 provides a ligand contact to L-serine. Glu348–Ser351 contacts ATP. Position 384 (Ser384) interacts with L-serine.

The protein belongs to the class-II aminoacyl-tRNA synthetase family. Type-1 seryl-tRNA synthetase subfamily. Homodimer. The tRNA molecule binds across the dimer.

It localises to the cytoplasm. It carries out the reaction tRNA(Ser) + L-serine + ATP = L-seryl-tRNA(Ser) + AMP + diphosphate + H(+). It catalyses the reaction tRNA(Sec) + L-serine + ATP = L-seryl-tRNA(Sec) + AMP + diphosphate + H(+). It participates in aminoacyl-tRNA biosynthesis; selenocysteinyl-tRNA(Sec) biosynthesis; L-seryl-tRNA(Sec) from L-serine and tRNA(Sec): step 1/1. Catalyzes the attachment of serine to tRNA(Ser). Is also able to aminoacylate tRNA(Sec) with serine, to form the misacylated tRNA L-seryl-tRNA(Sec), which will be further converted into selenocysteinyl-tRNA(Sec). This Streptococcus pyogenes serotype M3 (strain SSI-1) protein is Serine--tRNA ligase.